The chain runs to 603 residues: Threonine--tRNA ligase (603 aa).

The segment at 209 to 500 (DHRKLGNEMK…LIEHCAGELP (292 aa)) is catalytic. C301, H352, and H477 together coordinate Zn(2+).

It belongs to the class-II aminoacyl-tRNA synthetase family. As to quaternary structure, homodimer. Zn(2+) is required as a cofactor.

The protein resides in the cytoplasm. The enzyme catalyses tRNA(Thr) + L-threonine + ATP = L-threonyl-tRNA(Thr) + AMP + diphosphate + H(+). In terms of biological role, catalyzes the attachment of threonine to tRNA(Thr) in a two-step reaction: L-threonine is first activated by ATP to form Thr-AMP and then transferred to the acceptor end of tRNA(Thr). Also edits incorrectly charged L-seryl-tRNA(Thr). In Campylobacter lari (strain RM2100 / D67 / ATCC BAA-1060), this protein is Threonine--tRNA ligase.